Consider the following 395-residue polypeptide: MEVAYKEDLLTSFAEAFSIDRLTDVRVFFAPGRVNLIGEHTDYNGGYVFPGALTNGTYMVIKLRDDGEYHLRSANFDTSVVFRNSDLRFDPKDDWGNYPKGIIAELAKLGVDLPGATIYFYGNIPNGAGLSSSASIGMVTAYGLTQCSGIDIDRVTLAKLCQRMENDFIGVSTGLMDQFAVGMGKKDHALFLNTSSLEYDQVPLILKGYKLVITNSNKRRGLADSKYNERRRECEIGLEQLRKKQTNLSHLGEVTEEMFAELGPVIEDELIYRRVRHVVTEDARVLAAVSALKAGELQTFGELMKASHLSLREDYDVTGVELDTLFDLQASAPGCIGTRMTGAGFGGCTVSIVHEEEITAFQTVVSKGYEKKIGYKPTFYVTELGDGVNEWKGGA.

E39–D42 lines the substrate pocket. Residues S73 and G127–S133 contribute to the ATP site. Positions 133 and 165 each coordinate Mg(2+). D177 (proton acceptor) is an active-site residue. Y227 is a substrate binding site.

The protein belongs to the GHMP kinase family. GalK subfamily.

It localises to the cytoplasm. The enzyme catalyses alpha-D-galactose + ATP = alpha-D-galactose 1-phosphate + ADP + H(+). Its pathway is carbohydrate metabolism; galactose metabolism. Catalyzes the transfer of the gamma-phosphate of ATP to D-galactose to form alpha-D-galactose-1-phosphate (Gal-1-P). This Halalkalibacterium halodurans (strain ATCC BAA-125 / DSM 18197 / FERM 7344 / JCM 9153 / C-125) (Bacillus halodurans) protein is Galactokinase.